The primary structure comprises 388 residues: Phosphoglycerate kinase (388 aa).

Residues 21–23 (DLN), Arg36, 59–62 (HLGR), Arg114, and Arg147 each bind substrate. ATP-binding positions include Lys198, Glu315, and 341–344 (GGDT).

This sequence belongs to the phosphoglycerate kinase family. Monomer.

It localises to the cytoplasm. The catalysed reaction is (2R)-3-phosphoglycerate + ATP = (2R)-3-phospho-glyceroyl phosphate + ADP. Its pathway is carbohydrate degradation; glycolysis; pyruvate from D-glyceraldehyde 3-phosphate: step 2/5. The sequence is that of Phosphoglycerate kinase from Buchnera aphidicola subsp. Schizaphis graminum (strain Sg).